The following is a 2531-amino-acid chain: Probable polyketide synthase 26 (2531 aa).

A Ketosynthase family 3 (KS3) domain is found at 10–433 (QEDIAIIGFR…GSNCCLVLTE (424 aa)). Residues Cys-174, His-316, and His-356 each act as for beta-ketoacyl synthase activity in the active site. Residues 620–653 (GINPSFIVGHSLGELPMAFCSGMIDFDTVCYLLY) are acyl/malonyl transferase. Residue Ser-630 is the For acyl/malonyl transferase activity of the active site. The tract at residues 915–1036 (MDTLGFSNEK…ANYHLSHRDD (122 aa)) is N-terminal hotdog fold. The 292-residue stretch at 915 to 1206 (MDTLGFSNEK…LKSLIPLKDP (292 aa)) folds into the PKS/mFAS DH domain. His-948 serves as the catalytic Proton acceptor; for dehydratase activity. Positions 1055 to 1206 (NLTKLSKNQF…LKSLIPLKDP (152 aa)) are C-terminal hotdog fold. Asp-1117 functions as the Proton donor; for dehydratase activity in the catalytic mechanism. A Carrier domain is found at 2431-2509 (ASENPVKDLL…DNIKILTDSY (79 aa)). Ser-2468 carries the O-(pantetheine 4'-phosphoryl)serine modification.

Pantetheine 4'-phosphate is required as a cofactor.

Functionally, probable polyketide synthase. This is Probable polyketide synthase 26 (pks26) from Dictyostelium discoideum (Social amoeba).